A 585-amino-acid chain; its full sequence is SCF E3 ubiquitin ligase complex F-box protein grrA (585 aa).

Over residues 1-10 (MARSRQPTRF) the composition is skewed to polar residues. Disordered regions lie at residues 1-34 (MARS…DTDF) and 41-60 (DSQS…QNDP). A compositionally biased stretch (low complexity) spans 11 to 25 (SSEAPSESSSSTSPE). In terms of domain architecture, F-box spans 65–113 (PPIAYLPPEILISIFSKLSSPRDLLSCLLVCRIWALNCVGLLWHRPSCN). LRR repeat units follow at residues 147-171 (TEDV…TLTN), 172-197 (CRKL…DVSE), 198-223 (LRSL…NITG), 224-249 (CVKV…KLNG), 250-275 (VSQV…DLQE), 276-301 (CKLV…RLAH), 302-329 (CTEI…DLTA), 330-355 (CENI…VLAK), 356-381 (CKFI…HLGH), 382-407 (CSNI…DLAC), 408-432 (CSRL…GLVK), 433-465 (CQLI…HLSY), and 466-491 (CVNL…SLTG).

In terms of assembly, part of a SCF E3 ubiquitin ligase complex. Specifically expressed in ascus mother cells.

The protein localises to the cytoplasm. Its function is as follows. Involved in meiosis and required for ascospore formation. Involved in substrate recognition in ubiquitin-dependent degradation. The chain is SCF E3 ubiquitin ligase complex F-box protein grrA (grrA) from Emericella nidulans (strain FGSC A4 / ATCC 38163 / CBS 112.46 / NRRL 194 / M139) (Aspergillus nidulans).